A 179-amino-acid chain; its full sequence is ATP synthase subunit delta (179 aa).

This sequence belongs to the ATPase delta chain family. F-type ATPases have 2 components, F(1) - the catalytic core - and F(0) - the membrane proton channel. F(1) has five subunits: alpha(3), beta(3), gamma(1), delta(1), epsilon(1). F(0) has three main subunits: a(1), b(2) and c(10-14). The alpha and beta chains form an alternating ring which encloses part of the gamma chain. F(1) is attached to F(0) by a central stalk formed by the gamma and epsilon chains, while a peripheral stalk is formed by the delta and b chains.

The protein resides in the cell membrane. In terms of biological role, f(1)F(0) ATP synthase produces ATP from ADP in the presence of a proton or sodium gradient. F-type ATPases consist of two structural domains, F(1) containing the extramembraneous catalytic core and F(0) containing the membrane proton channel, linked together by a central stalk and a peripheral stalk. During catalysis, ATP synthesis in the catalytic domain of F(1) is coupled via a rotary mechanism of the central stalk subunits to proton translocation. Functionally, this protein is part of the stalk that links CF(0) to CF(1). It either transmits conformational changes from CF(0) to CF(1) or is implicated in proton conduction. The protein is ATP synthase subunit delta of Staphylococcus saprophyticus subsp. saprophyticus (strain ATCC 15305 / DSM 20229 / NCIMB 8711 / NCTC 7292 / S-41).